The chain runs to 358 residues: Triacylglycerol lipase (358 aa).

The N-terminal stretch at 1–39 is a signal peptide; the sequence is MVRSMRSRVAARAVAWALAVMPLAGAAGLTMAASPAAVA. The AB hydrolase-1 domain occupies 48–327; it reads YPVILVHGLA…TSYHWNHLDE (280 aa). Leucine 56 serves as a coordination point for substrate. Serine 126 functions as the Nucleophile in the catalytic mechanism. Glutamine 127 contacts substrate. An intrachain disulfide couples cysteine 229 to cysteine 308. Residue aspartate 280 participates in Ca(2+) binding. Residues aspartate 302 and histidine 324 each act as charge relay system in the active site. Ca(2+) contacts are provided by aspartate 326, glutamine 330, and valine 334.

It belongs to the AB hydrolase superfamily. Pseudomonas lipase family. As to quaternary structure, monomer. Interacts with lipase-specific foldase Lif. Ca(2+) serves as cofactor.

It localises to the secreted. The enzyme catalyses a triacylglycerol + H2O = a diacylglycerol + a fatty acid + H(+). Functionally, catalyzes the hydrolysis of triacylglycerol. The protein is Triacylglycerol lipase of Burkholderia plantarii.